A 673-amino-acid polypeptide reads, in one-letter code: Vasorin (673 aa).

The signal sequence occupies residues 1–23 (MCSRVPLLLPLLLLLALGPGVQG). In terms of domain architecture, LRRNT spans 24–51 (CPSGCQCSQPQTVFCTARQGTTVPRDVP). Topologically, residues 24-575 (CPSGCQCSQP…VTQAREGNLP (552 aa)) are extracellular. 10 LRR repeats span residues 52-74 (PDTV…SFAG), 77-98 (GLQL…VFQP), 101-122 (NLSN…TFRG), 125-146 (RLER…AFDT), 149-170 (RLLE…RLPR), 171-191 (LLLL…ILDT), 193-214 (NVEA…LFSR), 217-238 (NLHD…IRGL), 240-262 (GLTR…DLAG), and 265-287 (ALQE…SGLF). N-linked (GlcNAc...) asparagine glycosylation is present at Asn101. N-linked (GlcNAc...) (complex) asparagine glycosylation occurs at Asn117. An N-linked (GlcNAc...) asparagine glycan is attached at Asn273. Positions 298–351 (NPFNCVCPLSWFGPWVRESHVTLASPEETRCHFPPKNAGRLLLELDYADFGCPA) constitute an LRRCT domain. Residues 358–370 (VPTTRPVVREPTA) show a composition bias toward low complexity. The interval 358-404 (VPTTRPVVREPTALSSSLAPTWLSPTEPATEAPSPPSTAPPTVGPVP) is disordered. The segment covering 390–404 (PSPPSTAPPTVGPVP) has biased composition (pro residues). The 38-residue stretch at 405–442 (QPQDCPPSTCLNGGTCHLGTRHHLACLCPEGFTGLYCE) folds into the EGF-like domain. 3 disulfide bridges follow: Cys409-Cys420, Cys414-Cys430, and Cys432-Cys441. One can recognise a Fibronectin type-III domain in the interval 460–558 (PPRSLTLGIE…ACGEAHTPPA (99 aa)). Residues Asn500 and Asn528 are each glycosylated (N-linked (GlcNAc...) asparagine). The chain crosses the membrane as a helical span at residues 576-596 (LLIAPALAAVLLAALAAVGAA). At 597 to 673 (YCVRRGRAMA…QSPLHAKPYI (77 aa)) the chain is on the cytoplasmic side.

In terms of assembly, interacts with TGFB1, TGFB2 and TGFB3. Post-translationally, N-glycosylated. N-glycan heterogeneity at Asn-117: Hex5HexNAc4 (minor), dHex1Hex5HexNAc4 (major), Hex6HexNAc5 (minor) and dHex1Hex6HexNAc5 (minor). In terms of tissue distribution, expressed at highest levels in aorta, at intermediate levels in kidney and placenta and at lowest levels in brain, heart, liver, lung and skeletal muscle. Within the aorta, the strongest expression is found in the tunica media of the proximal ascending aorta, the descending thoracic aorta, the abdominal aorta and the coronary arteries. Within the kidney, expression is found in the interstitial cells.

It is found in the membrane. The protein localises to the secreted. Its function is as follows. May act as an inhibitor of TGF-beta signaling. The sequence is that of Vasorin (VASN) from Homo sapiens (Human).